The chain runs to 432 residues: Ornithine decarboxylase, chloroplastic (432 aa).

Position 95 is an N6-(pyridoxal phosphate)lysine (lysine 95). Residues serine 227, glycine 265, and 298-301 (EPGR) contribute to the pyridoxal 5'-phosphate site. 341–342 (YD) is a binding site for substrate. Catalysis depends on cysteine 377, which acts as the Proton donor; shared with dimeric partner. Position 378 (aspartate 378) interacts with substrate. Tyrosine 406 lines the pyridoxal 5'-phosphate pocket.

It belongs to the Orn/Lys/Arg decarboxylase class-II family. Homodimer. Only the dimer is catalytically active, as the active sites are constructed of residues from both monomers. Pyridoxal 5'-phosphate serves as cofactor.

It is found in the plastid. It localises to the chloroplast. The enzyme catalyses L-lysine + H(+) = cadaverine + CO2. It catalyses the reaction L-ornithine + H(+) = putrescine + CO2. Its pathway is alkaloid biosynthesis; nicotine biosynthesis. The protein operates within amine and polyamine biosynthesis; putrescine biosynthesis via L-ornithine pathway; putrescine from L-ornithine: step 1/1. With respect to regulation, repressed by alpha-difluoromethylornithine (DFMO), 5,5'-dithiobis-(2-nitrobenzoic acid) (DTNB) and salicylaldehyde. Functionally, involved in the biosynthesis of pyridine alkaloid natural products, leading mainly to the production of anabasine, anatabine, nicotine and nornicotine, effective deterrents against herbivores with antiparasitic and pesticide properties (neurotoxins); nornicotine serves as the precursor in the synthesis of the carcinogen compound N'-nitrosonornicotine (NNN). Catalyzes the first and rate-limiting step of polyamine biosynthesis that converts ornithine into putrescine, which is the precursor for the polyamines, spermidine and spermine. Can also use, with a lower efficiency, L-lysine as substrate to produce cadaverine. Polyamines are essential for cell proliferation and are implicated in cellular processes, ranging from DNA replication to apoptosis. The sequence is that of Ornithine decarboxylase, chloroplastic from Nicotiana glutinosa (Tobacco).